The chain runs to 367 residues: UDP-N-acetylenolpyruvoylglucosamine reductase 2 (367 aa).

In terms of domain architecture, FAD-binding PCMH-type spans 31–198 (IGGKPRSAVR…LAIELQLLTD (168 aa)). Arg176 is an active-site residue. Ser256 serves as the catalytic Proton donor. The active site involves Glu357.

Belongs to the MurB family. FAD is required as a cofactor.

The protein localises to the cytoplasm. It carries out the reaction UDP-N-acetyl-alpha-D-muramate + NADP(+) = UDP-N-acetyl-3-O-(1-carboxyvinyl)-alpha-D-glucosamine + NADPH + H(+). Its pathway is cell wall biogenesis; peptidoglycan biosynthesis. Functionally, cell wall formation. This Corynebacterium glutamicum (strain ATCC 13032 / DSM 20300 / JCM 1318 / BCRC 11384 / CCUG 27702 / LMG 3730 / NBRC 12168 / NCIMB 10025 / NRRL B-2784 / 534) protein is UDP-N-acetylenolpyruvoylglucosamine reductase 2 (murB2).